A 402-amino-acid polypeptide reads, in one-letter code: Arginine biosynthesis bifunctional protein ArgJ (402 aa).

Substrate is bound by residues Thr152, Lys178, Thr189, Glu275, Asn397, and Thr402. Thr189 functions as the Nucleophile in the catalytic mechanism.

It belongs to the ArgJ family. Heterotetramer of two alpha and two beta chains.

It is found in the cytoplasm. The catalysed reaction is N(2)-acetyl-L-ornithine + L-glutamate = N-acetyl-L-glutamate + L-ornithine. It carries out the reaction L-glutamate + acetyl-CoA = N-acetyl-L-glutamate + CoA + H(+). The protein operates within amino-acid biosynthesis; L-arginine biosynthesis; L-ornithine and N-acetyl-L-glutamate from L-glutamate and N(2)-acetyl-L-ornithine (cyclic): step 1/1. It participates in amino-acid biosynthesis; L-arginine biosynthesis; N(2)-acetyl-L-ornithine from L-glutamate: step 1/4. Catalyzes two activities which are involved in the cyclic version of arginine biosynthesis: the synthesis of N-acetylglutamate from glutamate and acetyl-CoA as the acetyl donor, and of ornithine by transacetylation between N(2)-acetylornithine and glutamate. In Lactiplantibacillus plantarum (strain ATCC BAA-793 / NCIMB 8826 / WCFS1) (Lactobacillus plantarum), this protein is Arginine biosynthesis bifunctional protein ArgJ.